A 94-amino-acid chain; its full sequence is Co-chaperonin GroES (94 aa).

Belongs to the GroES chaperonin family. As to quaternary structure, heptamer of 7 subunits arranged in a ring. Interacts with the chaperonin GroEL.

It is found in the cytoplasm. Together with the chaperonin GroEL, plays an essential role in assisting protein folding. The GroEL-GroES system forms a nano-cage that allows encapsulation of the non-native substrate proteins and provides a physical environment optimized to promote and accelerate protein folding. GroES binds to the apical surface of the GroEL ring, thereby capping the opening of the GroEL channel. The protein is Co-chaperonin GroES of Bacillus subtilis (strain 168).